The chain runs to 464 residues: 3-isopropylmalate dehydratase large subunit (464 aa).

3 residues coordinate [4Fe-4S] cluster: Cys-337, Cys-397, and Cys-400.

Belongs to the aconitase/IPM isomerase family. LeuC type 1 subfamily. In terms of assembly, heterodimer of LeuC and LeuD. [4Fe-4S] cluster is required as a cofactor.

The enzyme catalyses (2R,3S)-3-isopropylmalate = (2S)-2-isopropylmalate. It functions in the pathway amino-acid biosynthesis; L-leucine biosynthesis; L-leucine from 3-methyl-2-oxobutanoate: step 2/4. Catalyzes the isomerization between 2-isopropylmalate and 3-isopropylmalate, via the formation of 2-isopropylmaleate. This Bacillus cereus (strain G9842) protein is 3-isopropylmalate dehydratase large subunit.